We begin with the raw amino-acid sequence, 360 residues long: D-alanine--D-alanine ligase (360 aa).

The 207-residue stretch at 146–352 folds into the ATP-grasp domain; sequence KICAEHAGLH…FSQLIDRLLQ (207 aa). 179–234 serves as a coordination point for ATP; it reads LEEFTLPFFVKPASQGSSIGITKVHRPEELAAALEKAFMVDTKVLIEKTIEGREIE. D305, E319, and N321 together coordinate Mg(2+).

The protein belongs to the D-alanine--D-alanine ligase family. Mg(2+) serves as cofactor. Requires Mn(2+) as cofactor.

The protein resides in the cytoplasm. It catalyses the reaction 2 D-alanine + ATP = D-alanyl-D-alanine + ADP + phosphate + H(+). The protein operates within cell wall biogenesis; peptidoglycan biosynthesis. Functionally, cell wall formation. The sequence is that of D-alanine--D-alanine ligase from Prosthecochloris aestuarii (strain DSM 271 / SK 413).